A 425-amino-acid polypeptide reads, in one-letter code: Glutamate-1-semialdehyde 2,1-aminomutase (425 aa).

K265 is subject to N6-(pyridoxal phosphate)lysine.

The protein belongs to the class-III pyridoxal-phosphate-dependent aminotransferase family. HemL subfamily. In terms of assembly, homodimer. It depends on pyridoxal 5'-phosphate as a cofactor.

It is found in the cytoplasm. It carries out the reaction (S)-4-amino-5-oxopentanoate = 5-aminolevulinate. Its pathway is porphyrin-containing compound metabolism; protoporphyrin-IX biosynthesis; 5-aminolevulinate from L-glutamyl-tRNA(Glu): step 2/2. The polypeptide is Glutamate-1-semialdehyde 2,1-aminomutase (Clostridium perfringens (strain ATCC 13124 / DSM 756 / JCM 1290 / NCIMB 6125 / NCTC 8237 / Type A)).